The following is a 647-amino-acid chain: Protein INVOLVED IN DE NOVO 2 (647 aa).

Disordered stretches follow at residues 1 to 20 and 101 to 123; these read MGST…SESE and SASE…DCDH. The segment covering 9 to 20 has biased composition (acidic residues); that stretch reads SDDEDSDISESE. Residues 253–508 are a coiled coil; the sequence is IAELTEEEAR…NIMKEWNTNI (256 aa).

As to quaternary structure, interacts with FMD1/IDNL1. Forms a complex with FMD1/IDNL1 and FMD2/INDL2. Can form homodimers. Interacts with MORC6.

Forms a complex with FDM1/IDNL1 and FDM2/IDNL2 that is required for RNA-directed DNA methylation (RdDM) and that functions at a downstream step of the RdDM pathway and downstream of small interfering RNA (siRNA) formation. Required for de novo DNA methylation, siRNA accumulation and siRNA-mediated maintenance methylation. Required for several post-transcriptional gene silencing pathways. Binds double-stranded RNAs (dsRNAs) with 5'-overhangs through its XS domain. Binds long non-coding RNA (lncRNA) in an AGO4-dependent manner and associates with DRM2, resulting in DNA methylation of RdDM target loci. Mediates the silencing of a subset of MORC6 target loci. In Arabidopsis thaliana (Mouse-ear cress), this protein is Protein INVOLVED IN DE NOVO 2.